The following is a 558-amino-acid chain: 2-isopropylmalate synthase (558 aa).

Residues 30–303 (PIWCSVDLRD…DPKLDFSNIP (274 aa)) enclose the Pyruvate carboxyltransferase domain. Mg(2+) contacts are provided by D39, H242, H244, and N278. A regulatory domain region spans residues 438-558 (LNNTLCVQDF…GLVSALNRII (121 aa)).

It belongs to the alpha-IPM synthase/homocitrate synthase family. LeuA type 2 subfamily. Homodimer. Requires Mg(2+) as cofactor.

It localises to the cytoplasm. The enzyme catalyses 3-methyl-2-oxobutanoate + acetyl-CoA + H2O = (2S)-2-isopropylmalate + CoA + H(+). It functions in the pathway amino-acid biosynthesis; L-leucine biosynthesis; L-leucine from 3-methyl-2-oxobutanoate: step 1/4. In terms of biological role, catalyzes the condensation of the acetyl group of acetyl-CoA with 3-methyl-2-oxobutanoate (2-ketoisovalerate) to form 3-carboxy-3-hydroxy-4-methylpentanoate (2-isopropylmalate). The polypeptide is 2-isopropylmalate synthase (Helicobacter hepaticus (strain ATCC 51449 / 3B1)).